We begin with the raw amino-acid sequence, 384 residues long: S-adenosylmethionine synthase (384 aa).

Residue histidine 15 participates in ATP binding. Aspartate 17 contributes to the Mg(2+) binding site. Glutamate 43 lines the K(+) pocket. Glutamate 56 and glutamine 99 together coordinate L-methionine. Residues 99-109 (QSPDINQGVDR) are flexible loop. ATP contacts are provided by residues 164-166 (DAK), 230-231 (RF), aspartate 239, 245-246 (RK), alanine 262, and lysine 266. Aspartate 239 serves as a coordination point for L-methionine. An L-methionine-binding site is contributed by lysine 270.

This sequence belongs to the AdoMet synthase family. In terms of assembly, homotetramer; dimer of dimers. It depends on Mg(2+) as a cofactor. K(+) is required as a cofactor.

The protein localises to the cytoplasm. The catalysed reaction is L-methionine + ATP + H2O = S-adenosyl-L-methionine + phosphate + diphosphate. The protein operates within amino-acid biosynthesis; S-adenosyl-L-methionine biosynthesis; S-adenosyl-L-methionine from L-methionine: step 1/1. Catalyzes the formation of S-adenosylmethionine (AdoMet) from methionine and ATP. The overall synthetic reaction is composed of two sequential steps, AdoMet formation and the subsequent tripolyphosphate hydrolysis which occurs prior to release of AdoMet from the enzyme. The protein is S-adenosylmethionine synthase of Salmonella agona (strain SL483).